Consider the following 417-residue polypeptide: Riboflavin biosynthesis protein RibBA (417 aa).

The tract at residues 1–204 is DHBP synthase; it reads MTRLDSIERA…IADLIEWRRK (204 aa). Residues 28–29, Asp33, 141–145, and Glu165 each bind D-ribulose 5-phosphate; these read RE and RPGHT. Glu29 is a binding site for Mg(2+). His144 is a binding site for Mg(2+). Residues 205–417 form a GTP cyclohydrolase II region; the sequence is HEKHVQRIAE…LDDHPEADGA (213 aa). 259 to 263 is a GTP binding site; sequence RVHSE. Cys264, Cys275, and Cys277 together coordinate Zn(2+). Residues Gln280, 303–305, and Thr325 contribute to the GTP site; that span reads EGR. Asp337 acts as the Proton acceptor; for GTP cyclohydrolase activity in catalysis. The Nucleophile; for GTP cyclohydrolase activity role is filled by Arg339. GTP contacts are provided by Thr360 and Lys365.

The protein in the N-terminal section; belongs to the DHBP synthase family. This sequence in the C-terminal section; belongs to the GTP cyclohydrolase II family. Requires Mg(2+) as cofactor. Mn(2+) is required as a cofactor. The cofactor is Zn(2+).

The enzyme catalyses D-ribulose 5-phosphate = (2S)-2-hydroxy-3-oxobutyl phosphate + formate + H(+). It carries out the reaction GTP + 4 H2O = 2,5-diamino-6-hydroxy-4-(5-phosphoribosylamino)-pyrimidine + formate + 2 phosphate + 3 H(+). It participates in cofactor biosynthesis; riboflavin biosynthesis; 2-hydroxy-3-oxobutyl phosphate from D-ribulose 5-phosphate: step 1/1. The protein operates within cofactor biosynthesis; riboflavin biosynthesis; 5-amino-6-(D-ribitylamino)uracil from GTP: step 1/4. Its function is as follows. Catalyzes the conversion of D-ribulose 5-phosphate to formate and 3,4-dihydroxy-2-butanone 4-phosphate. Functionally, catalyzes the conversion of GTP to 2,5-diamino-6-ribosylamino-4(3H)-pyrimidinone 5'-phosphate (DARP), formate and pyrophosphate. In Mycobacteroides abscessus (strain ATCC 19977 / DSM 44196 / CCUG 20993 / CIP 104536 / JCM 13569 / NCTC 13031 / TMC 1543 / L948) (Mycobacterium abscessus), this protein is Riboflavin biosynthesis protein RibBA.